The following is a 386-amino-acid chain: Indole-3-acetate O-methyltransferase 1 (386 aa).

Tyrosine 30 provides a ligand contact to S-adenosyl-L-methionine. Residues tyrosine 30 and 33–37 each bind substrate; that span reads NSQAQ. S-adenosyl-L-methionine contacts are provided by residues glycine 72, 72–73, asparagine 78, 108–111, aspartate 110, 152–154, and 169–171; these read GC, FSDL, SFY, and AFS. 170–174 is a substrate binding site; sequence FSLHW. The Mg(2+) site is built by asparagine 191, valine 195, arginine 277, aspartate 278, phenylalanine 280, and asparagine 281. Serine 334 provides a ligand contact to substrate.

It belongs to the methyltransferase superfamily. SABATH family. As to quaternary structure, homodimer. It depends on Mg(2+) as a cofactor. Expressed in seedling roots and leaves. Expressed in the stigma, funiculus, and vascular bundles in sepals, petals and stamens.

It carries out the reaction (indol-3-yl)acetate + S-adenosyl-L-methionine = methyl (indol-3-yl)acetate + S-adenosyl-L-homocysteine. Its function is as follows. Catalyzes the methylation of the free carboxyl end of the plant hormone indole-3-acetic acid (IAA). Converts IAA to IAA methyl ester (MeIAA). Regulates IAA activities by IAA methylation. Methylation of IAA plays an important role in regulating plant development and auxin homeostasis. Required for correct leaf pattern formation. MeIAA seems to be an inactive form of IAA. This is Indole-3-acetate O-methyltransferase 1 (IAMT1) from Arabidopsis thaliana (Mouse-ear cress).